The following is a 108-amino-acid chain: Small ribosomal subunit protein uS17 (108 aa).

It belongs to the universal ribosomal protein uS17 family. In terms of assembly, part of the 30S ribosomal subunit.

In terms of biological role, one of the primary rRNA binding proteins, it binds specifically to the 5'-end of 16S ribosomal RNA. In Methanocorpusculum labreanum (strain ATCC 43576 / DSM 4855 / Z), this protein is Small ribosomal subunit protein uS17.